A 122-amino-acid polypeptide reads, in one-letter code: Large ribosomal subunit protein uL14 (122 aa).

It belongs to the universal ribosomal protein uL14 family. As to quaternary structure, part of the 50S ribosomal subunit. Forms a cluster with proteins L3 and L19. In the 70S ribosome, L14 and L19 interact and together make contacts with the 16S rRNA in bridges B5 and B8.

Functionally, binds to 23S rRNA. Forms part of two intersubunit bridges in the 70S ribosome. This chain is Large ribosomal subunit protein uL14, found in Citrifermentans bemidjiense (strain ATCC BAA-1014 / DSM 16622 / JCM 12645 / Bem) (Geobacter bemidjiensis).